The following is a 101-amino-acid chain: Urease subunit beta (101 aa).

This sequence belongs to the urease beta subunit family. Heterotrimer of UreA (gamma), UreB (beta) and UreC (alpha) subunits. Three heterotrimers associate to form the active enzyme.

It localises to the cytoplasm. The catalysed reaction is urea + 2 H2O + H(+) = hydrogencarbonate + 2 NH4(+). Its pathway is nitrogen metabolism; urea degradation; CO(2) and NH(3) from urea (urease route): step 1/1. The polypeptide is Urease subunit beta (Hahella chejuensis (strain KCTC 2396)).